Reading from the N-terminus, the 372-residue chain is GTPase Obg (372 aa).

An Obg domain is found at 1–159 (MAFVDEAKFF…KWLLIELKLM (159 aa)). A disordered region spans residues 121 to 141 (GSGGMGNPHFSSGSNRTPRVA). The region spanning 160-329 (ADVGLVGLPN…LVKLIGDIID (170 aa)) is the OBG-type G domain. Residues 166–173 (GLPNAGKS), 191–195 (FTTLE), 213–216 (DIPG), 280–283 (NKCD), and 310–312 (SAI) each bind GTP. Mg(2+)-binding residues include S173 and T193. Residues 346 to 372 (QDLKKQKEEERRQELKKQKEEEQAKDE) are disordered.

This sequence belongs to the TRAFAC class OBG-HflX-like GTPase superfamily. OBG GTPase family. Monomer. The cofactor is Mg(2+).

It localises to the cytoplasm. Functionally, an essential GTPase which binds GTP, GDP and possibly (p)ppGpp with moderate affinity, with high nucleotide exchange rates and a fairly low GTP hydrolysis rate. Plays a role in control of the cell cycle, stress response, ribosome biogenesis and in those bacteria that undergo differentiation, in morphogenesis control. This is GTPase Obg from Desulfotalea psychrophila (strain LSv54 / DSM 12343).